The primary structure comprises 55 residues: Large ribosomal subunit protein bL33 (55 aa).

It belongs to the bacterial ribosomal protein bL33 family.

The polypeptide is Large ribosomal subunit protein bL33 (Methylobacterium nodulans (strain LMG 21967 / CNCM I-2342 / ORS 2060)).